Here is a 402-residue protein sequence, read N- to C-terminus: Multidrug resistance protein MdtH (402 aa).

The next 11 helical transmembrane spans lie at Y13–I33, S34–L54, P99–F116, I139–L159, L165–L185, V214–M234, A243–I263, L277–L297, L300–T320, L340–G360, and P369–S389.

This sequence belongs to the major facilitator superfamily. DHA1 family. MdtH (TC 2.A.1.2.21) subfamily.

It localises to the cell inner membrane. The chain is Multidrug resistance protein MdtH from Klebsiella pneumoniae subsp. pneumoniae (strain ATCC 700721 / MGH 78578).